Here is a 204-residue protein sequence, read N- to C-terminus: NADH-quinone oxidoreductase subunit C (204 aa).

The protein belongs to the complex I 30 kDa subunit family. As to quaternary structure, NDH-1 is composed of 14 different subunits. Subunits NuoB, C, D, E, F, and G constitute the peripheral sector of the complex.

The protein resides in the cell inner membrane. The enzyme catalyses a quinone + NADH + 5 H(+)(in) = a quinol + NAD(+) + 4 H(+)(out). Functionally, NDH-1 shuttles electrons from NADH, via FMN and iron-sulfur (Fe-S) centers, to quinones in the respiratory chain. The immediate electron acceptor for the enzyme in this species is believed to be ubiquinone. Couples the redox reaction to proton translocation (for every two electrons transferred, four hydrogen ions are translocated across the cytoplasmic membrane), and thus conserves the redox energy in a proton gradient. This chain is NADH-quinone oxidoreductase subunit C, found in Rhodopseudomonas palustris (strain ATCC BAA-98 / CGA009).